A 29-amino-acid polypeptide reads, in one-letter code: Glucagon (29 aa).

This sequence belongs to the glucagon family.

The protein resides in the secreted. Its function is as follows. Glucagon plays a key role in glucose metabolism and homeostasis. Regulates blood glucose by increasing gluconeogenesis and decreasing glycolysis. The polypeptide is Glucagon (gcg) (Polypterus senegalus (Senegal bichir)).